The chain runs to 432 residues: uncharacterized protein (432 aa).

N6-(pyridoxal phosphate)lysine is present on Lys243.

Belongs to the class-II pyridoxal-phosphate-dependent aminotransferase family. Pyridoxal 5'-phosphate serves as cofactor.

The protein localises to the cytoplasm. This is an uncharacterized protein from Methanocaldococcus jannaschii (strain ATCC 43067 / DSM 2661 / JAL-1 / JCM 10045 / NBRC 100440) (Methanococcus jannaschii).